Reading from the N-terminus, the 397-residue chain is Putative 8-amino-7-oxononanoate synthase (397 aa).

Arg-22 provides a ligand contact to substrate. Residue 109-110 (GW) coordinates pyridoxal 5'-phosphate. Residue His-139 participates in substrate binding. Pyridoxal 5'-phosphate contacts are provided by residues Ser-187, 212 to 215 (DEAH), and 241 to 244 (TFSK). Lys-244 is subject to N6-(pyridoxal phosphate)lysine. Thr-358 is a binding site for substrate.

It belongs to the class-II pyridoxal-phosphate-dependent aminotransferase family. BioF subfamily. Homodimer. Pyridoxal 5'-phosphate is required as a cofactor.

It carries out the reaction 6-carboxyhexanoyl-[ACP] + L-alanine + H(+) = (8S)-8-amino-7-oxononanoate + holo-[ACP] + CO2. The protein operates within cofactor biosynthesis; biotin biosynthesis. Catalyzes the decarboxylative condensation of pimeloyl-[acyl-carrier protein] and L-alanine to produce 8-amino-7-oxononanoate (AON), [acyl-carrier protein], and carbon dioxide. The sequence is that of Putative 8-amino-7-oxononanoate synthase (bioF) from Bordetella parapertussis (strain 12822 / ATCC BAA-587 / NCTC 13253).